The sequence spans 258 residues: Indole-3-glycerol phosphate synthase (258 aa).

Belongs to the TrpC family.

It catalyses the reaction 1-(2-carboxyphenylamino)-1-deoxy-D-ribulose 5-phosphate + H(+) = (1S,2R)-1-C-(indol-3-yl)glycerol 3-phosphate + CO2 + H2O. The protein operates within amino-acid biosynthesis; L-tryptophan biosynthesis; L-tryptophan from chorismate: step 4/5. The chain is Indole-3-glycerol phosphate synthase from Legionella pneumophila (strain Paris).